We begin with the raw amino-acid sequence, 167 residues long: Ureidoglycolate lyase (167 aa).

It belongs to the ureidoglycolate lyase family. Homodimer. It depends on Ni(2+) as a cofactor.

It catalyses the reaction (S)-ureidoglycolate = urea + glyoxylate. Its pathway is nitrogen metabolism; (S)-allantoin degradation. Catalyzes the catabolism of the allantoin degradation intermediate (S)-ureidoglycolate, generating urea and glyoxylate. Involved in the utilization of allantoin as nitrogen source. In Pseudomonas putida (strain W619), this protein is Ureidoglycolate lyase.